The sequence spans 360 residues: MTKKIQVGLIFGGNSSEYEVSIVSGHNIYKAIDKDKFDVHPIWITNEGYFASEEESFKVLEDPSYQVENPHKVNNISNIIELKNLPEIDVFFPIVHGNLGEDGVLQGLFRLMNKPFVGDDVLAAAATMDKEFTKILAQRVGVPVADWISIKRFEYDDKNNDKLNYEKVAEKLGHDMFVKPSNQGSSVGVNHVTNAEEYAAALEEAFKYDDKVLVEETVPGTEVETAVLGNDKPIVAGVGQITNAKGSFYTYENKYDDNSTSKLQIPADLPQDIVDTVRENARKVYEITECSGMARIDSMLTPDGKVVLTEVNALPGFTNISMYPKLFEEAGIPYTELITRLIQAGMDRFDHKKTLLHKHD.

The region spanning 134 to 343 (KILAQRVGVP…YTELITRLIQ (210 aa)) is the ATP-grasp domain. 169–224 (AEKLGHDMFVKPSNQGSSVGVNHVTNAEEYAAALEEAFKYDDKVLVEETVPGTEVE) contributes to the ATP binding site. 3 residues coordinate Mg(2+): Asp297, Glu310, and Asn312.

The protein belongs to the D-alanine--D-alanine ligase family. Mg(2+) is required as a cofactor. Mn(2+) serves as cofactor.

It is found in the cytoplasm. It catalyses the reaction 2 D-alanine + ATP = D-alanyl-D-alanine + ADP + phosphate + H(+). The protein operates within cell wall biogenesis; peptidoglycan biosynthesis. In terms of biological role, cell wall formation. This Lactobacillus acidophilus (strain ATCC 700396 / NCK56 / N2 / NCFM) protein is D-alanine--D-alanine ligase.